The following is a 788-amino-acid chain: Leucine-rich repeat and fibronectin type-III domain-containing protein 2 (788 aa).

An N-terminal signal peptide occupies residues 1-20 (METLLGGLLAFGMAFAVVDA). In terms of domain architecture, LRRNT spans 21–52 (CPKYCVCQNLSESLGTLCPSKGLLFVPPDIDR). The Extracellular portion of the chain corresponds to 21–534 (CPKYCVCQNL…MHSQILGGTM (514 aa)). N-linked (GlcNAc...) asparagine glycosylation is found at asparagine 29 and asparagine 74. LRR repeat units follow at residues 53-74 (RTVE…DFAN), 77-98 (GLVD…SFLD), 101-122 (SLRS…TLRG), 125-146 (NLQH…AFED), 150-171 (TLED…SVRR), 174-195 (NLHQ…TFAD), and 198-219 (KLAR…PIFA). The 47-residue stretch at 242–288 (NPLHCNCELLWLRRLERDDDLKTCGSPGGLKGRYFWHIREEEFVCEP) folds into the LRRCT domain. One can recognise an Ig-like domain in the interval 289 to 375 (PLITQHTHKL…GEATATVEVS (87 aa)). Cysteines 310 and 359 form a disulfide. Asparagine 332, asparagine 341, asparagine 384, and asparagine 457 each carry an N-linked (GlcNAc...) asparagine glycan. The interval 383–423 (SNSTSRMAPPKSRLSDITGSSKTSRGGGGSGAGEPPKSTPE) is disordered. The 97-residue stretch at 422 to 518 (PERAVLVSDV…GCAQFFTKAD (97 aa)) folds into the Fibronectin type-III domain. The helical transmembrane segment at 535–555 (ILVIGGIIVATLLVFIVILMV) threads the bilayer. The Cytoplasmic portion of the chain corresponds to 556-788 (RYKVCNHDAP…SSEWVMESTV (233 aa)). The span at 620–641 (CDSSSSSSLGSGEAAGLSRGPW) shows a compositional bias: low complexity. Disordered regions lie at residues 620 to 655 (CDSS…PSLD) and 668 to 707 (SQRK…ATRA). Over residues 642 to 651 (RLPPPAPRPK) the composition is skewed to pro residues. Residues 785 to 788 (ESTV) carry the PDZ-binding motif.

Belongs to the LRFN family. In terms of assembly, forms heteromeric complexes with LRFN1, LRFN3 and LRFN4. Can form homomeric complexes, but not across cell junctions. Can form heteromeric complexes with LRFN5. Interacts with DLG1, DLG3 and DLG4; interaction with DLG4 is mediated by the PDZ-binding domain. Also interacts with DLG2. Interacts with 2 NMDA receptor subunits GRIN1 and GRIN2A.

It is found in the membrane. The protein localises to the synapse. Its subcellular location is the postsynaptic cell membrane. In terms of biological role, promotes neurite outgrowth in hippocampal neurons. Enhances the cell surface expression of GRIN1 and GRIN2A NMDA receptor subunits. May play a role in redistributing DLG4 to the cell periphery. The sequence is that of Leucine-rich repeat and fibronectin type-III domain-containing protein 2 (Lrfn2) from Rattus norvegicus (Rat).